A 1031-amino-acid polypeptide reads, in one-letter code: Caprin-2 (1031 aa).

5 disordered regions span residues 1 to 27 (MKSAKSQVNQDQQGENQRALSPLQSTL), 364 to 458 (LQEE…SWEN), 500 to 520 (PKDVPKPLPQPIDSSSALPKD), 605 to 658 (DQAS…SSEA), and 830 to 876 (RSGT…SMTP). 2 stretches are compositionally biased toward polar residues: residues 425 to 439 (VSVQSEQSGSRSWTT) and 446 to 458 (ASVQPGTPVSWEN). Low complexity predominate over residues 608-646 (SSGSETEFTTSETPEMVVSPCKPKPASALASPNPPLSKS). Residues 830-853 (RSGTSSGLQANSRAGWSDSSQVSS) are compositionally biased toward polar residues. Phosphoserine occurs at positions 852 and 853. A C1q domain is found at 897–1031 (PQQMRVAFSA…TFSGYLLYQD (135 aa)). Ca(2+)-binding residues include Asp-982 and Glu-988.

This sequence belongs to the caprin family. Homotrimer; via C1q domain. Found in a complex with LRP6, CCNY and CDK14 during G2/M stage; CAPRIN2 functions as a scaffold for the complex by binding to CCNY via its N terminus and to CDK14 via its C terminus. Interacts with LRP5. Interacts with LRP6. Specifically expressed in brain (at protein level).

It is found in the cytoplasm. The protein resides in the cell membrane. Its function is as follows. Promotes phosphorylation of the Wnt coreceptor LRP6, leading to increased activity of the canonical Wnt signaling pathway. Facilitates constitutive LRP6 phosphorylation by CDK14/CCNY during G2/M stage of the cell cycle, which may potentiate cells for Wnt signaling. May regulate the transport and translation of mRNAs, modulating for instance the expression of proteins involved in synaptic plasticity in neurons. Involved in regulation of growth as erythroblasts shift from a highly proliferative state towards their terminal phase of differentiation. May be involved in apoptosis. The chain is Caprin-2 from Mus musculus (Mouse).